Reading from the N-terminus, the 299-residue chain is Craniofacial development protein 1 (299 aa).

Acidic residues-rich tracts occupy residues 1-18 (MEEF…DEDY) and 25-43 (YSED…DGEE). Disordered stretches follow at residues 1–156 (MEEF…ELEK) and 192–224 (FFKQ…SSGM). Residues 49–65 (QGKKRKAQSIPARKRRQ) show a composition bias toward basic residues. The segment covering 70-94 (LEEEEEEDANSESEGSSSEEEDDAA) has biased composition (acidic residues). Phosphoserine is present on residues serine 82, serine 85, and serine 86. Over residues 95–112 (EQEKGIGSEDARKKKEDE) the composition is skewed to basic and acidic residues. The residue at position 116 (serine 116) is a Phosphoserine. Lysine 150 participates in a covalent cross-link: Glycyl lysine isopeptide (Lys-Gly) (interchain with G-Cter in SUMO2). Positions 178-217 (VTKEVDATSKEAKSFFKQNEKEKPQANVPSALPSLPAGSG) are hydrophilic. Residues 192–201 (FFKQNEKEKP) show a composition bias toward basic and acidic residues. Serine 216 is modified (phosphoserine). Residues 218-299 (LKRSSGMSSL…RDLRLSKMKP (82 aa)) form the BCNT-C domain. Lysine 219 is modified (N6-methyllysine). Serine 250 is subject to Phosphoserine.

In terms of processing, phosphorylated by CK2 (casein kinase II) in vitro. As to expression, ubiquitous.

Its subcellular location is the chromosome. It is found in the centromere. The protein localises to the kinetochore. Its function is as follows. May play a role during embryogenesis. The sequence is that of Craniofacial development protein 1 (CFDP1) from Homo sapiens (Human).